A 217-amino-acid polypeptide reads, in one-letter code: Probable transaldolase (217 aa).

Catalysis depends on Lys83, which acts as the Schiff-base intermediate with substrate.

Belongs to the transaldolase family. Type 3B subfamily.

The protein resides in the cytoplasm. The enzyme catalyses D-sedoheptulose 7-phosphate + D-glyceraldehyde 3-phosphate = D-erythrose 4-phosphate + beta-D-fructose 6-phosphate. It functions in the pathway carbohydrate degradation; pentose phosphate pathway; D-glyceraldehyde 3-phosphate and beta-D-fructose 6-phosphate from D-ribose 5-phosphate and D-xylulose 5-phosphate (non-oxidative stage): step 2/3. Its function is as follows. Transaldolase is important for the balance of metabolites in the pentose-phosphate pathway. The polypeptide is Probable transaldolase (tal) (Aquifex aeolicus (strain VF5)).